Here is a 491-residue protein sequence, read N- to C-terminus: Glutamyl-tRNA(Gln) amidotransferase subunit A (491 aa).

Active-site charge relay system residues include K78 and S158. S182 (acyl-ester intermediate) is an active-site residue.

The protein belongs to the amidase family. GatA subfamily. In terms of assembly, heterotrimer of A, B and C subunits.

The enzyme catalyses L-glutamyl-tRNA(Gln) + L-glutamine + ATP + H2O = L-glutaminyl-tRNA(Gln) + L-glutamate + ADP + phosphate + H(+). Its function is as follows. Allows the formation of correctly charged Gln-tRNA(Gln) through the transamidation of misacylated Glu-tRNA(Gln) in organisms which lack glutaminyl-tRNA synthetase. The reaction takes place in the presence of glutamine and ATP through an activated gamma-phospho-Glu-tRNA(Gln). The chain is Glutamyl-tRNA(Gln) amidotransferase subunit A from Nitrobacter winogradskyi (strain ATCC 25391 / DSM 10237 / CIP 104748 / NCIMB 11846 / Nb-255).